The following is a 460-amino-acid chain: Serine/threonine-protein kinase cds1 (460 aa).

An FHA domain is found at 60-116 (WRFGRHKSCEVVLNGPRVSNFHFEIYQGHRNDSDESENVVFLHDHSSNGTFLNFERL). Residues 167–433 (YEIIRTLGSG…ESEALQHPWF (267 aa)) form the Protein kinase domain. ATP contacts are provided by residues 173 to 181 (LGSGTFAVV) and K196. Catalysis depends on D294, which acts as the Proton acceptor. The span at 438–453 (THEHRTPPSSSEHEAT) shows a compositional bias: basic and acidic residues. The interval 438-460 (THEHRTPPSSSEHEATEQLNSSS) is disordered. Position 443 is a phosphothreonine (T443).

Belongs to the protein kinase superfamily. CAMK Ser/Thr protein kinase family. CHEK2 subfamily. Interacts with rad26. Post-translationally, autophosphorylated.

The catalysed reaction is L-seryl-[protein] + ATP = O-phospho-L-seryl-[protein] + ADP + H(+). The enzyme catalyses L-threonyl-[protein] + ATP = O-phospho-L-threonyl-[protein] + ADP + H(+). Has a role in the DNA replication-monitoring S/G2 checkpoint system. It is responsible for blocking mitosis in the S phase. It monitors DNA synthesis by interacting with DNA polymerase alpha and sends a signal to block the onset of mitosis while DNA synthesis is in progress. Phosphorylates rad60 and dna2. In Schizosaccharomyces pombe (strain 972 / ATCC 24843) (Fission yeast), this protein is Serine/threonine-protein kinase cds1 (cds1).